The sequence spans 179 residues: Large ribosomal subunit protein uL6 (179 aa).

Belongs to the universal ribosomal protein uL6 family. As to quaternary structure, part of the 50S ribosomal subunit.

Functionally, this protein binds to the 23S rRNA, and is important in its secondary structure. It is located near the subunit interface in the base of the L7/L12 stalk, and near the tRNA binding site of the peptidyltransferase center. The polypeptide is Large ribosomal subunit protein uL6 (Prochlorococcus marinus (strain NATL2A)).